Here is a 394-residue protein sequence, read N- to C-terminus: Acid ceramidase (394 aa).

Positions 1–18 are cleaved as a signal peptide; sequence MRGQSLLTWVLAAAVTCA. Cys-30 and Cys-339 are disulfide-bonded. Cys-142 acts as the Nucleophile in catalysis. Asn-172, Asn-194, Asn-258, Asn-341, and Asn-347 each carry an N-linked (GlcNAc...) asparagine glycan. Cys-387 and Cys-391 form a disulfide bridge.

Belongs to the acid ceramidase family. In terms of assembly, heterodimer; disulfide-linked. The heterodimer is composed of the disulfide-linked alpha and beta chains produced by autocatalytic cleavage of the precursor. Post-translationally, N-glycosylated. In terms of processing, proteolytically cleaved into two chains alpha and beta that remain associated via a disulfide bond. Cleavage gives rise to a conformation change that activates the enzyme. The same catalytic Cys residue mediates the autoproteolytic cleavage and subsequent hydrolysis of lipid substrates. The beta chain may undergo an additional C-terminal processing. As to expression, widely expressed.

It is found in the lysosome. The protein resides in the secreted. It carries out the reaction an N-acylsphing-4-enine + H2O = sphing-4-enine + a fatty acid. The enzyme catalyses N-dodecanoylsphing-4-enine + H2O = dodecanoate + sphing-4-enine. It catalyses the reaction N-(9Z-octadecenoyl)-sphing-4-enine + H2O = sphing-4-enine + (9Z)-octadecenoate. The catalysed reaction is N-tetradecanoylsphing-4-enine + H2O = tetradecanoate + sphing-4-enine. It carries out the reaction N-hexadecanoylsphing-4-enine + H2O = sphing-4-enine + hexadecanoate. The enzyme catalyses N-octadecanoylsphing-4-enine + H2O = sphing-4-enine + octadecanoate. It catalyses the reaction N-dodecanoyl-(4R)-hydroxysphinganine + H2O = (4R)-hydroxysphinganine + dodecanoate. The catalysed reaction is N-(dodecanoyl)-sphinganine + H2O = dodecanoate + sphinganine. It carries out the reaction N-(acetyl)-sphing-4-enine + H2O = sphing-4-enine + acetate. The enzyme catalyses N-(hexanoyl)sphing-4-enine + H2O = hexanoate + sphing-4-enine. It catalyses the reaction N-octanoylsphing-4-enine + H2O = octanoate + sphing-4-enine. The catalysed reaction is N-dodecanoylethanolamine + H2O = dodecanoate + ethanolamine. Its pathway is lipid metabolism; sphingolipid metabolism. Functionally, lysosomal ceramidase that hydrolyzes sphingolipid ceramides into sphingosine and free fatty acids at acidic pH. Ceramides, sphingosine, and its phosphorylated form sphingosine-1-phosphate are bioactive lipids that mediate cellular signaling pathways regulating several biological processes including cell proliferation, apoptosis and differentiation. Has a higher catalytic efficiency towards C12-ceramides versus other ceramides. Also catalyzes the reverse reaction allowing the synthesis of ceramides from fatty acids and sphingosine. For the reverse synthetic reaction, the natural sphingosine D-erythro isomer is more efficiently utilized as a substrate compared to D-erythro-dihydrosphingosine and D-erythro-phytosphingosine, while the fatty acids with chain lengths of 12 or 14 carbons are the most efficiently used. Also has an N-acylethanolamine hydrolase activity. By regulating the levels of ceramides, sphingosine and sphingosine-1-phosphate in the epidermis, mediates the calcium-induced differentiation of epidermal keratinocytes. Also indirectly regulates tumor necrosis factor/TNF-induced apoptosis. By regulating the intracellular balance between ceramides and sphingosine, in adrenocortical cells, probably also acts as a regulator of steroidogenesis. This is Acid ceramidase from Mus musculus (Mouse).